A 159-amino-acid polypeptide reads, in one-letter code: Keratin-associated protein 11-1 (159 aa).

4 tandem repeats follow at residues 107–116, 117–126, 127–136, and 137–146. The interval 107–146 is 4 X 10 AA approximate repeats; the sequence is CQPLSGVSTVCKPVRSISTVCQPVGGVSTICQPTCGVSRT.

Belongs to the PMG family. As to expression, wool.

Its function is as follows. In the wool cortex, wool keratin intermediate filaments are embedded in an interfilamentous matrix, consisting of wool keratin-associated proteins (KRTAP), which are essential for the formation of a rigid and resistant wool shaft through their extensive disulfide bond cross-linking with abundant cysteine residues of wool keratins. The matrix proteins include the high-sulfur and high-glycine-tyrosine keratins. This Capra hircus (Goat) protein is Keratin-associated protein 11-1 (KRTAP11-1).